The primary structure comprises 83 residues: Translational regulator CsrA (83 aa).

It belongs to the CsrA/RsmA family. In terms of assembly, homodimer; the beta-strands of each monomer intercalate to form a hydrophobic core, while the alpha-helices form wings that extend away from the core.

Its subcellular location is the cytoplasm. A translational regulator that binds mRNA to regulate translation initiation and/or mRNA stability. Usually binds in the 5'-UTR at or near the Shine-Dalgarno sequence preventing ribosome-binding, thus repressing translation. Its main target seems to be the major flagellin gene, while its function is anatagonized by FliW. The chain is Translational regulator CsrA from Thermotoga petrophila (strain ATCC BAA-488 / DSM 13995 / JCM 10881 / RKU-1).